Here is a 98-residue protein sequence, read N- to C-terminus: Integration host factor subunit alpha (98 aa).

Positions 51–71 are disordered; it reads NFDLRDKNERPGRNPKTGEDI. Positions 53-69 are enriched in basic and acidic residues; the sequence is DLRDKNERPGRNPKTGE.

Belongs to the bacterial histone-like protein family. Heterodimer of an alpha and a beta chain.

Functionally, this protein is one of the two subunits of integration host factor, a specific DNA-binding protein that functions in genetic recombination as well as in transcriptional and translational control. This is Integration host factor subunit alpha from Vibrio campbellii (strain ATCC BAA-1116).